The chain runs to 343 residues: NADH-cytochrome b5 reductase 2 (343 aa).

A helical transmembrane segment spans residues 41–61 (ILLGAAAVGLAGAGAYFFSGA). In terms of domain architecture, FAD-binding FR-type spans 92-197 (QGWLSLKLEE…KGPLPKYPWE (106 aa)). FAD is bound at residue 200–235 (KHKHIALVAGGTGITPMYQLIRAIFNNPDDKTKVTL).

The protein belongs to the flavoprotein pyridine nucleotide cytochrome reductase family. The cofactor is FAD.

The protein resides in the mitochondrion outer membrane. It catalyses the reaction 2 Fe(III)-[cytochrome b5] + NADH = 2 Fe(II)-[cytochrome b5] + NAD(+) + H(+). In terms of biological role, may mediate the reduction of outer membrane cytochrome b5. This chain is NADH-cytochrome b5 reductase 2 (mcr-1), found in Neurospora crassa (strain ATCC 24698 / 74-OR23-1A / CBS 708.71 / DSM 1257 / FGSC 987).